A 480-amino-acid chain; its full sequence is Cobyric acid synthase (480 aa).

In terms of domain architecture, GATase cobBQ-type spans 249 to 436 (KLKVVVPVLT…LHGFLDSEAA (188 aa)). C330 acts as the Nucleophile in catalysis. Residue H428 is part of the active site.

The protein belongs to the CobB/CobQ family. CobQ subfamily.

It functions in the pathway cofactor biosynthesis; adenosylcobalamin biosynthesis. Its function is as follows. Catalyzes amidations at positions B, D, E, and G on adenosylcobyrinic A,C-diamide. NH(2) groups are provided by glutamine, and one molecule of ATP is hydrogenolyzed for each amidation. In Vibrio vulnificus (strain YJ016), this protein is Cobyric acid synthase.